The primary structure comprises 244 residues: tRNA (guanine-N(1)-)-methyltransferase (244 aa).

Residues Gly114 and 134-139 (IGDYVL) each bind S-adenosyl-L-methionine. The interval 220 to 244 (RRPDLLEKAGASPGKSGSNFGKHDA) is disordered.

The protein belongs to the RNA methyltransferase TrmD family. Homodimer.

It is found in the cytoplasm. The enzyme catalyses guanosine(37) in tRNA + S-adenosyl-L-methionine = N(1)-methylguanosine(37) in tRNA + S-adenosyl-L-homocysteine + H(+). Specifically methylates guanosine-37 in various tRNAs. This Rhizobium johnstonii (strain DSM 114642 / LMG 32736 / 3841) (Rhizobium leguminosarum bv. viciae) protein is tRNA (guanine-N(1)-)-methyltransferase.